The sequence spans 174 residues: FITAAFGIPQISTGDMLRAAIKAGTPLGLEAKKIIDEGGLVRDDIIIGMVKERIAQDDCKNGFLFDGFPRTLAQAEAIVEAGVDLDAVVEIDVPDSVIVDRMSGRRVHLASGRTYHVTYNPPKVEGKDDVTGEDLIQRDDDKEETVKKRLAVYHEQTEVLVDFYSKLEGEHAPK.

Positions 12–41 (STGDMLRAAIKAGTPLGLEAKKIIDEGGLV) are NMP. Residues threonine 13, arginine 18, 39–41 (GLV), 67–70 (GFPR), and glutamine 74 contribute to the AMP site. Positions 104–141 (GRRVHLASGRTYHVTYNPPKVEGKDDVTGEDLIQRDDD) are LID. ATP is bound by residues arginine 105 and 114-115 (TY). Arginine 138 and arginine 149 together coordinate AMP.

Belongs to the adenylate kinase family. As to quaternary structure, monomer.

The protein localises to the cytoplasm. The enzyme catalyses AMP + ATP = 2 ADP. Its pathway is purine metabolism; AMP biosynthesis via salvage pathway; AMP from ADP: step 1/1. In terms of biological role, catalyzes the reversible transfer of the terminal phosphate group between ATP and AMP. Plays an important role in cellular energy homeostasis and in adenine nucleotide metabolism. The chain is Adenylate kinase from Neisseria flavescens.